The following is a 167-amino-acid chain: C-X-C motif chemokine 15 (167 aa).

The N-terminal stretch at 1-25 (MAAQGWSMLLLAVLNLGIFVRPCDT) is a signal peptide. Intrachain disulfides connect Cys-30–Cys-57 and Cys-32–Cys-73. At Ser-157 the chain carries Phosphoserine.

The protein belongs to the intercrine alpha (chemokine CxC) family. As to expression, expression restricted to the lung, produced by bronchoepithelial cells and is released into the airways. Expressed at low levels in fetal lung.

It is found in the secreted. Functionally, chemotactic for neutrophils. Involved in lung-specific neutrophil trafficking during normal and inflammatory conditions. The sequence is that of C-X-C motif chemokine 15 (Cxcl15) from Mus musculus (Mouse).